Consider the following 445-residue polypeptide: ATP-dependent protease ATPase subunit HslU (445 aa).

ATP-binding positions include Ile17, 59-64 (GVGKTE), Asp254, Glu319, and Arg391.

Belongs to the ClpX chaperone family. HslU subfamily. As to quaternary structure, a double ring-shaped homohexamer of HslV is capped on each side by a ring-shaped HslU homohexamer. The assembly of the HslU/HslV complex is dependent on binding of ATP.

The protein resides in the cytoplasm. Functionally, ATPase subunit of a proteasome-like degradation complex; this subunit has chaperone activity. The binding of ATP and its subsequent hydrolysis by HslU are essential for unfolding of protein substrates subsequently hydrolyzed by HslV. HslU recognizes the N-terminal part of its protein substrates and unfolds these before they are guided to HslV for hydrolysis. The polypeptide is ATP-dependent protease ATPase subunit HslU (Pseudomonas savastanoi pv. phaseolicola (strain 1448A / Race 6) (Pseudomonas syringae pv. phaseolicola (strain 1448A / Race 6))).